The primary structure comprises 318 residues: 4-hydroxy-3-methylbut-2-enyl diphosphate reductase (318 aa).

Position 12 (Cys-12) interacts with [4Fe-4S] cluster. (2E)-4-hydroxy-3-methylbut-2-enyl diphosphate is bound by residues His-41 and His-74. Positions 41 and 74 each coordinate dimethylallyl diphosphate. Isopentenyl diphosphate contacts are provided by His-41 and His-74. Cys-96 provides a ligand contact to [4Fe-4S] cluster. His-124 serves as a coordination point for (2E)-4-hydroxy-3-methylbut-2-enyl diphosphate. Residue His-124 participates in dimethylallyl diphosphate binding. His-124 is a binding site for isopentenyl diphosphate. The active-site Proton donor is Glu-126. Thr-168 contributes to the (2E)-4-hydroxy-3-methylbut-2-enyl diphosphate binding site. Position 198 (Cys-198) interacts with [4Fe-4S] cluster. The (2E)-4-hydroxy-3-methylbut-2-enyl diphosphate site is built by Ser-226, Ser-227, Asn-228, and Ser-270. Dimethylallyl diphosphate-binding residues include Ser-226, Ser-227, Asn-228, and Ser-270. Ser-226, Ser-227, Asn-228, and Ser-270 together coordinate isopentenyl diphosphate.

This sequence belongs to the IspH family. It depends on [4Fe-4S] cluster as a cofactor.

The enzyme catalyses isopentenyl diphosphate + 2 oxidized [2Fe-2S]-[ferredoxin] + H2O = (2E)-4-hydroxy-3-methylbut-2-enyl diphosphate + 2 reduced [2Fe-2S]-[ferredoxin] + 2 H(+). The catalysed reaction is dimethylallyl diphosphate + 2 oxidized [2Fe-2S]-[ferredoxin] + H2O = (2E)-4-hydroxy-3-methylbut-2-enyl diphosphate + 2 reduced [2Fe-2S]-[ferredoxin] + 2 H(+). Its pathway is isoprenoid biosynthesis; dimethylallyl diphosphate biosynthesis; dimethylallyl diphosphate from (2E)-4-hydroxy-3-methylbutenyl diphosphate: step 1/1. It participates in isoprenoid biosynthesis; isopentenyl diphosphate biosynthesis via DXP pathway; isopentenyl diphosphate from 1-deoxy-D-xylulose 5-phosphate: step 6/6. Its function is as follows. Catalyzes the conversion of 1-hydroxy-2-methyl-2-(E)-butenyl 4-diphosphate (HMBPP) into a mixture of isopentenyl diphosphate (IPP) and dimethylallyl diphosphate (DMAPP). Acts in the terminal step of the DOXP/MEP pathway for isoprenoid precursor biosynthesis. The sequence is that of 4-hydroxy-3-methylbut-2-enyl diphosphate reductase from Psychrobacter arcticus (strain DSM 17307 / VKM B-2377 / 273-4).